The sequence spans 2495 residues: Zinc finger protein 462 (2495 aa).

3 consecutive C2H2-type zinc fingers follow at residues 4 to 27, 108 to 131, and 162 to 185; these read LQCD…QDVH, FQCK…RKVH, and FSCQ…KMYH. Lys20 participates in a covalent cross-link: Glycyl lysine isopeptide (Lys-Gly) (interchain with G-Cter in SUMO1); alternate. Lys20 is covalently cross-linked (Glycyl lysine isopeptide (Lys-Gly) (interchain with G-Cter in SUMO2); alternate). An interaction with PBX1 region spans residues 215–241; it reads PCKELPAEVVERSILESMVKPLTKSRG. Residues Lys234 and Lys271 each participate in a glycyl lysine isopeptide (Lys-Gly) (interchain with G-Cter in SUMO2) cross-link. Disordered regions lie at residues 278 to 301, 329 to 357, and 370 to 395; these read QQEG…NSTY, RPNS…NSGL, and DMTN…DLNE. Residues 332–343 are compositionally biased toward low complexity; it reads SSSTSKFSSSMS. Glycyl lysine isopeptide (Lys-Gly) (interchain with G-Cter in SUMO2) cross-links involve residues Lys337, Lys348, and Lys350. Phosphoserine is present on residues Ser351 and Ser355. A compositionally biased stretch (polar residues) spans 370–387; sequence DMTNSSADLDTNSMLNDS. A Glycyl lysine isopeptide (Lys-Gly) (interchain with G-Cter in SUMO2) cross-link involves residue Lys429. 2 consecutive C2H2-type zinc fingers follow at residues 440 to 463 and 471 to 493; these read FQCP…ENIH and YKCD…KQCH. A Glycyl lysine isopeptide (Lys-Gly) (interchain with G-Cter in SUMO2) cross-link involves residue Lys485. Residues 492–590 form a disordered region; sequence CHTGTSDWDT…PQPPTQAPPL (99 aa). Residues 493–502 show a composition bias toward polar residues; that stretch reads HTGTSDWDTV. The segment covering 503 to 515 has biased composition (low complexity); it reads NSQSESLSSSLNE. Residues 542 to 590 show a composition bias toward pro residues; that stretch reads PPQPPPPLPPPPPPPSQPLPQPPPPPLQSPHQVPPPTQQPQPPTQAPPL. The C2H2-type 6 zinc-finger motif lies at 593–616; it reads YKCTMCSYSTMTLKGLRVHQQHKH. Glycyl lysine isopeptide (Lys-Gly) (interchain with G-Cter in SUMO2) cross-links involve residues Lys624, Lys650, and Lys661. A disordered region spans residues 629 to 654; the sequence is PSSLPLENETDSHPSSSNTVKKSQTS. Residues 641-654 show a composition bias toward polar residues; the sequence is HPSSSNTVKKSQTS. Position 681 is a phosphoserine (Ser681). Lys699 is covalently cross-linked (Glycyl lysine isopeptide (Lys-Gly) (interchain with G-Cter in SUMO2)). 3 C2H2-type zinc fingers span residues 835-858, 878-900, and 917-940; these read YYCK…QRMH, YRCL…YGEH, and YRCR…QRMH. Lys978 is covalently cross-linked (Glycyl lysine isopeptide (Lys-Gly) (interchain with G-Cter in SUMO2)). The interval 980–999 is disordered; that stretch reads MATSTPVARGGGLPATFNKN. A C2H2-type 10 zinc finger spans residues 1023–1046; sequence YDCDVCSFASPNMHSVLVHYQKKH. Ser1083 bears the Phosphoserine mark. Lys1128 is covalently cross-linked (Glycyl lysine isopeptide (Lys-Gly) (interchain with G-Cter in SUMO2)). A Phosphoserine modification is found at Ser1159. Glycyl lysine isopeptide (Lys-Gly) (interchain with G-Cter in SUMO2) cross-links involve residues Lys1196, Lys1204, Lys1210, and Lys1232. 2 consecutive C2H2-type zinc fingers follow at residues 1254–1277 and 1459–1482; these read LKCR…KKDH and YQCT…GKKH. Lys1488 is covalently cross-linked (Glycyl lysine isopeptide (Lys-Gly) (interchain with G-Cter in SUMO2)). Residues 1504–1527 form a C2H2-type 13 zinc finger; the sequence is YKCRHCPYINTRIHGVLTHYQKRH. Glycyl lysine isopeptide (Lys-Gly) (interchain with G-Cter in SUMO2) cross-links involve residues Lys1560 and Lys1580. 3 C2H2-type zinc fingers span residues 1566–1589, 1649–1672, and 1686–1709; these read YRCK…EKYH, FRCQ…RIKH, and FKCA…QKRH. Glycyl lysine isopeptide (Lys-Gly) (interchain with G-Cter in SUMO2) cross-links involve residues Lys1687 and Lys1769. The segment at 1881–1903 adopts a C2H2-type 17 zinc-finger fold; the sequence is FQCKHCDSKLQSIAELTSHLNIH. Residue Lys1935 forms a Glycyl lysine isopeptide (Lys-Gly) (interchain with G-Cter in SUMO2) linkage. The C2H2-type 18; degenerate zinc-finger motif lies at 1957–1981; sequence YKCKFCVEVHPTLRAICNHLRKHVQ. Lys1993 carries the post-translational modification N6-methyllysine. 3 consecutive C2H2-type zinc fingers follow at residues 2014–2037, 2043–2066, and 2072–2095; these read YSCQ…QTHH, FRCK…LKAH, and YKCS…LKVH. Lys2093 participates in a covalent cross-link: Glycyl lysine isopeptide (Lys-Gly) (interchain with G-Cter in SUMO2). Composition is skewed to polar residues over residues 2112 to 2121 and 2132 to 2149; these read SHAHPSSQKA and DSSY…NHYQ. Residues 2112 to 2172 are disordered; the sequence is SHAHPSSQKA…VPPSGTAAGT (61 aa). Ser2161 and Ser2166 each carry phosphoserine. 3 C2H2-type zinc fingers span residues 2180–2203, 2209–2232, and 2243–2265; these read LHCE…RDKH, FKCK…EAGH, and LRCP…IVLH. A Glycyl lysine isopeptide (Lys-Gly) (interchain with G-Cter in SUMO2) cross-link involves residue Lys2282. 2 C2H2-type zinc fingers span residues 2289–2311 and 2317–2340; these read FRCD…IEKH and YKCQ…RDEH. The tract at residues 2361-2387 is disordered; that stretch reads KEKIESSSSEDEDKDDEMSSKAEDREL. The span at 2377–2387 shows a compositional bias: basic and acidic residues; the sequence is EMSSKAEDREL. The C2H2-type 27 zinc finger occupies 2403-2425; that stretch reads FPCEFCGRAFSQGSEWERHVLRH. Lys2493 participates in a covalent cross-link: Glycyl lysine isopeptide (Lys-Gly) (interchain with G-Cter in SUMO2).

Interacts with PBX1 isoform PBX1b; this interaction prevents PBX1-HOXA9 heterodimer from forming and binding to DNA. In terms of tissue distribution, expressed in the cerebral cortex (at protein level). Expressed in embryonic stem cells (at protein level). Expressed in heart, liver, kidney, muscle, and female and male genital tracts (at protein level).

It is found in the nucleus. Its function is as follows. Zinc finger nuclear factor involved in transcription by regulating chromatin structure and organization. Involved in the pluripotency and differentiation of embryonic stem cells by regulating SOX2, POU5F1/OCT4, and NANOG. By binding PBX1, prevents the heterodimerization of PBX1 and HOXA9 and their binding to DNA. Regulates neuronal development and neural cell differentiation. The chain is Zinc finger protein 462 from Mus musculus (Mouse).